Consider the following 147-residue polypeptide: D-aminoacyl-tRNA deacylase (147 aa).

A Gly-cisPro motif, important for rejection of L-amino acids motif is present at residues 136 to 137 (GP).

This sequence belongs to the DTD family. In terms of assembly, homodimer.

The protein localises to the cytoplasm. It catalyses the reaction glycyl-tRNA(Ala) + H2O = tRNA(Ala) + glycine + H(+). The catalysed reaction is a D-aminoacyl-tRNA + H2O = a tRNA + a D-alpha-amino acid + H(+). Functionally, an aminoacyl-tRNA editing enzyme that deacylates mischarged D-aminoacyl-tRNAs. Also deacylates mischarged glycyl-tRNA(Ala), protecting cells against glycine mischarging by AlaRS. Acts via tRNA-based rather than protein-based catalysis; rejects L-amino acids rather than detecting D-amino acids in the active site. By recycling D-aminoacyl-tRNA to D-amino acids and free tRNA molecules, this enzyme counteracts the toxicity associated with the formation of D-aminoacyl-tRNA entities in vivo and helps enforce protein L-homochirality. The polypeptide is D-aminoacyl-tRNA deacylase (Streptococcus agalactiae serotype III (strain NEM316)).